The primary structure comprises 213 residues: Ras-related protein Rab-39B (213 aa).

Residues S17, G20, K21, S22, C23, S37, and T40 each coordinate GTP. S22 is a binding site for Mg(2+). The tract at residues 35 to 43 is switch-I; the sequence is QVSDPTVGV. The Mg(2+) site is built by T40 and D64. G67, H123, K124, D126, A154, and R155 together coordinate GTP. Residues 67–83 form a switch-II region; it reads GQERFRSITRAYYRNSV. S201 is modified (phosphoserine). S-geranylgeranyl cysteine attachment occurs at residues C211 and C213. Residue C213 is modified to Cysteine methyl ester.

This sequence belongs to the small GTPase superfamily. Rab family. As to quaternary structure, interacts (GDP-bound) with C9orf72; C9orf72 in complex with SMCR8 acts as a GEF for RAB39B. Interacts (in GTP-bound form) with PICK1 (via PDZ domain); a PICK1 homodimer may allow simultaneous association of RAB39B and GRIA2 to PICK1 which is involved in GRIA2 trafficking. Interacts with isoform c of RASSF1; the interaction is strong. Interacts with isoform a of RASSF1; the interaction is weak. Interacts with the DLG4/PSD-95. Interacts (GTP-bound) with HOPS complex components VPS39 and VPS41. Mg(2+) is required as a cofactor.

Its subcellular location is the cell membrane. The protein localises to the cytoplasmic vesicle membrane. It localises to the golgi apparatus. It is found in the cytoplasmic vesicle. The protein resides in the autophagosome membrane. Its subcellular location is the autolysosome membrane. It carries out the reaction GTP + H2O = GDP + phosphate + H(+). Regulated by guanine nucleotide exchange factors (GEFs) including C9orf72-SMCR8 complex, which promote the exchange of bound GDP for free GTP. Regulated by GTPase activating proteins (GAPs) which increase the GTP hydrolysis activity. Inhibited by GDP dissociation inhibitors (GDIs). Its function is as follows. The small GTPases Rab are key regulators of intracellular membrane trafficking, from the formation of transport vesicles to their fusion with membranes. Rabs cycle between an inactive GDP-bound form and an active GTP-bound form that is able to recruit to membranes different sets of downstream effectors directly responsible for vesicle formation, movement, tethering and fusion. RAB39B is involved in autophagy and may function in autophagosome formation. Binds downstream effector PICK1 to ensure selectively GRIA2 exit from the endoplasmic reticulum to the Golgi and to regulate AMPAR composition at the post-synapses and thus synaptic transmission. May regulate the homeostasis of SNCA/alpha-synuclein. The sequence is that of Ras-related protein Rab-39B (RAB39B) from Bos taurus (Bovine).